The following is a 446-amino-acid chain: Chromogranin-A (446 aa).

The first 16 residues, 1-16, serve as a signal peptide directing secretion; sequence SAAALALLLCAGQVIA. Cysteine 33 and cysteine 54 are joined by a disulfide. Positions 85–426 are disordered; sequence AKERSHQQKK…RPEDQELESL (342 aa). Serine 97 carries the post-translational modification Phosphoserine. The segment covering 105 to 138 has biased composition (basic and acidic residues); it reads VLEKQNDQAELKEGTEEASSKEAAEKRGDSKEVE. Residues 160 to 171 are compositionally biased toward acidic residues; that stretch reads EAEDQTPGEEEA. Residue serine 209 is modified to Phosphoserine. The span at 226–243 shows a compositional bias: basic and acidic residues; that stretch reads AGEKAVPEEEGPRSEAFD. Serine 286 carries the post-translational modification Phosphoserine. Glycine 304 carries the glycine amide modification. The residue at position 319 (serine 319) is a Phosphoserine. Basic and acidic residues predominate over residues 319–346; sequence SEEWENAKRWSKMDRLAKELTAEKRLQG. A compositionally biased stretch (acidic residues) spans 347–357; that stretch reads EEEEEEEEEDP. A Phosphoserine modification is found at serine 360. A Methionine sulfoxide modification is found at methionine 361. Serine 387, serine 391, serine 413, and serine 427 each carry phosphoserine. Basic and acidic residues predominate over residues 403–420; that stretch reads YLEEKKEEEGSANRRPED. Serine 413 is a glycosylation site (O-linked (Xyl...) (chondroitin sulfate) serine).

The protein belongs to the chromogranin/secretogranin protein family. As to quaternary structure, self-interacts; self-assembly is promoted in vitro by chondroitin sulfate attachment which occurs at mildly acidic pH conditions. Interacts with SCG3. Interacts with ITPR1 in the secretory granules. In terms of processing, O-glycosylated; contains chondroitin sulfate (CS). CS attachment is pH-dependent, being observed at mildly acidic conditions of pH 5 but not at neutral pH, and promotes self-assembly in vitro. Parathyroid CHGA is sulfated on tyrosine residues, whereas adrenal CHGA seems to be mainly sulfated on oligosaccharide residues.

The protein localises to the secreted. It localises to the cytoplasmic vesicle. The protein resides in the secretory vesicle. It is found in the neuronal dense core vesicle. Strongly inhibits glucose induced insulin release from the pancreas. In terms of biological role, inhibits low calcium-stimulated parathyroid cell secretion. Functionally, inhibits catecholamine release from chromaffin cells and noradrenergic neurons by acting as a non-competitive nicotinic cholinergic antagonist. Can induce mast cell migration, degranulation and production of cytokines and chemokines. Its function is as follows. Regulates granule biogenesis in endocrine cells by up-regulating the transcription of protease nexin 1 (SERPINE2) via a cAMP-PKA-SP1 pathway. This leads to inhibition of granule protein degradation in the Golgi complex which in turn promotes granule formation. The protein is Chromogranin-A (CHGA) of Sus scrofa (Pig).